The sequence spans 724 residues: Protein arginine N-methyltransferase 1.6 (724 aa).

SAM-dependent MTase PRMT-type domains are found at residues 61–388 and 395–721; these read NDQP…YNLK and HERT…IVTH. Catalysis depends on residues E183 and E192.

This sequence belongs to the class I-like SAM-binding methyltransferase superfamily. Protein arginine N-methyltransferase family. PRMT7 subfamily.

Functionally, arginine methyltransferase that can both catalyze the formation of omega-N monomethylarginine (MMA) and symmetrical dimethylarginine (sDMA). This Arabidopsis thaliana (Mouse-ear cress) protein is Protein arginine N-methyltransferase 1.6 (PRMT16).